A 602-amino-acid chain; its full sequence is Sodium- and chloride-dependent GABA transporter 2 (602 aa).

The Cytoplasmic portion of the chain corresponds to 1-40; sequence MENRASGTTSNGETKPVCPAMEKVEEDGTLEREHWNNKME. Helical transmembrane passes span 41 to 61, 68 to 88, and 121 to 141; these read FVLSVAGEIIGLGNVWRFPYL, GAFFIPYLIFLFTCGIPVFFL, and IVSLLNVYYIVVLAWALFYLF. Over 142–206 the chain is Extracellular; it reads SSFTTDLPWG…GIQHLGSLRW (65 aa). Cys153 and Cys162 are joined by a disulfide. Residues Asn169, Asn173, and Asn178 are each glycosylated (N-linked (GlcNAc...) asparagine). 2 consecutive transmembrane segments (helical) span residues 207–227 and 233–253; these read ELVLCLLLAWIICYFCIWKGV and VVYFTATFPYLMLVVLLIRGV. Residue Asn269 is glycosylated (N-linked (GlcNAc...) asparagine). 7 helical membrane passes run 282-302, 319-339, 366-386, 418-438, 453-473, 490-510, and 528-548; these read AGTQIFFSFAICLGCLTALGS, ILNSSTSFMAGFAIFSILGFM, VVMLPFSPLWACCFFFMVVLL, VLILIVSVISFFIGLIMLTEG, GMCLLFVAIFESLCVAWVYGA, PLIKYCWLFFTPAVCLATFLF, and WWGDALGWLLALSSMICIPAW. Residues 549-602 lie on the Cytoplasmic side of the membrane; the sequence is SIYKLRTLKGPLRERLRQLVCPAEDLPQKNQPEPTAPATPMTSLLRLTELESNC. At Thr587 the chain carries Phosphothreonine. Ser591 carries the phosphoserine modification.

Belongs to the sodium:neurotransmitter symporter (SNF) (TC 2.A.22) family. SLC6A13 subfamily. In terms of tissue distribution, expressed at high levels in liver, followed by kidney and leptomeninges, and very low levels in the cerebellum (at protein level). In the brain, detected in some blood vessels (at protein level). In the kidney, expressed in the cortex, including parts of the proximal tubules, but not in the medulla (at protein level). In the liver, highest expression in periportal hepatocytes, with highest density at the vascular side (at protein level). Also detected at low levels in other organs, including skeletal muscle.

The protein resides in the cell membrane. Its subcellular location is the basolateral cell membrane. It catalyses the reaction 4-aminobutanoate(out) + chloride(out) + 2 Na(+)(out) = 4-aminobutanoate(in) + chloride(in) + 2 Na(+)(in). The enzyme catalyses taurine(out) + chloride(out) + 2 Na(+)(out) = taurine(in) + chloride(in) + 2 Na(+)(in). It carries out the reaction beta-alanine(out) + chloride(out) + 2 Na(+)(out) = beta-alanine(in) + chloride(in) + 2 Na(+)(in). The catalysed reaction is hypotaurine(out) + chloride(out) + 2 Na(+)(out) = hypotaurine(in) + chloride(in) + 2 Na(+)(in). Gamma-aminobutyric acid (GABA) transport is inhibited by beta-alanine, taurine, hypotaurine, beta-guanidinopropionic acid, 2,3-diaminopropionic acid, guvacine and nipecotic acid. Beta-alanine transport is inhibited by GABA. Taurine transport is inhibited by GABA, beta-alanine, SNAP-5114, nigericin, nipecotic acid and ouabain. Its function is as follows. Mediates sodium- and chloride-dependent transport of gamma-aminobutyric acid (GABA). Can also mediate transport of beta-alanine, taurine and hypotaurine and is the major taurine transporter in hepatocytes. In Mus musculus (Mouse), this protein is Sodium- and chloride-dependent GABA transporter 2 (Slc6a13).